The sequence spans 549 residues: MFCVQCEQTIRTPAGNGCAYAQGMCGKTAETSDLQDVLIYTLQGLSAWALAAREHGIVDSEIDAFVPKAFFATLTNVNFDSARIVAYVNQALTYRQQLAAKLAPLAVQADTLPAAARFEPGADLLAQLAQAPQTAVNRGKNEVNEDIMGLRLLCLYGLKGAAAYMEHARVLDQQDAGVAAEFHRIMSWLGTDPSDLDPLFKCAMDIGLLNFKIMEMLDLGETTAFGHPEPTQVRVTPVPGKCILVSGHDMVDLKLILEQTKGTGINIYTHGEMLPALAYPFFKQYPHLVGNYGSAWQNQQKEFANFPGAVVMTSNCIIDPNVGNYSDRIFTRSIVGWPGVTHLEGEDFSAVIAKAQALEGFKHVELEHFITIGFARNALMQAAPAVIDKVKAGEISHFFLVGGCDGDRAERAYYTEFAKAIPQDSLLLTLGCGKYKFNKLDFGDIGGIPRLLDVGQCNDAYSAIQLALALSEAFECGVNDLPLTLVLSWFEQKAIVILLTLLALGVKDIRTGPTAPAFLTPALLKVLEEQFGLKGTTTAEADLAEILAA.

[2Fe-2S] cluster-binding residues include cysteine 3, cysteine 6, cysteine 18, and cysteine 25. Histidine 248, glutamate 272, cysteine 316, cysteine 404, cysteine 432, cysteine 457, glutamate 491, and lysine 493 together coordinate hybrid [4Fe-2O-2S] cluster. Cysteine 404 is subject to Cysteine persulfide.

The protein belongs to the HCP family. It depends on [2Fe-2S] cluster as a cofactor. The cofactor is hybrid [4Fe-2O-2S] cluster.

It is found in the cytoplasm. It carries out the reaction A + NH4(+) + H2O = hydroxylamine + AH2 + H(+). Catalyzes the reduction of hydroxylamine to form NH(3) and H(2)O. This Aeromonas hydrophila subsp. hydrophila (strain ATCC 7966 / DSM 30187 / BCRC 13018 / CCUG 14551 / JCM 1027 / KCTC 2358 / NCIMB 9240 / NCTC 8049) protein is Hydroxylamine reductase.